We begin with the raw amino-acid sequence, 753 residues long: Protein-lysine N-methyltransferase SMYD4 (753 aa).

Residue 112 to 114 (RSA) participates in S-adenosyl-L-methionine binding. In terms of domain architecture, SET spans 186-528 (DGVSVYFSSD…AGQEILHCYG (343 aa)). Zn(2+) is bound by residues Cys-246, Cys-249, Cys-259, Cys-262, Cys-268, Cys-272, His-281, and Cys-285. Residues 246–285 (CHHCLSQSLSFVPCPKCSYARYCGESCQKDAWDQWHQWEC) form an MYND-type zinc finger. S-adenosyl-L-methionine is bound by residues 467 to 468 (NH) and Tyr-527.

Belongs to the class V-like SAM-binding methyltransferase superfamily.

It localises to the nucleus. The protein localises to the cytoplasm. It catalyses the reaction L-lysyl-[protein] + S-adenosyl-L-methionine = N(6)-methyl-L-lysyl-[protein] + S-adenosyl-L-homocysteine + H(+). In terms of biological role, protein-lysine N-methyltransferase. Monomethylates PRMT5, modulating its transcriptional activity. May also act as a histone methyltransferase. Plays a critical role in cardiac development. Acts as a key epigenetic regulator of gene expression during cardiac development via its dual activities as a methyltransferase and negative regulator of HDAC1. The polypeptide is Protein-lysine N-methyltransferase SMYD4 (smyd4) (Danio rerio (Zebrafish)).